Here is a 154-residue protein sequence, read N- to C-terminus: 6,7-dimethyl-8-ribityllumazine synthase (154 aa).

Residues phenylalanine 22, 56-58 (AFE), and 80-82 (TVI) contribute to the 5-amino-6-(D-ribitylamino)uracil site. A (2S)-2-hydroxy-3-oxobutyl phosphate-binding site is contributed by 85–86 (ST). Histidine 88 (proton donor) is an active-site residue. Phenylalanine 113 contacts 5-amino-6-(D-ribitylamino)uracil. A (2S)-2-hydroxy-3-oxobutyl phosphate-binding site is contributed by arginine 127.

The protein belongs to the DMRL synthase family.

The enzyme catalyses (2S)-2-hydroxy-3-oxobutyl phosphate + 5-amino-6-(D-ribitylamino)uracil = 6,7-dimethyl-8-(1-D-ribityl)lumazine + phosphate + 2 H2O + H(+). The protein operates within cofactor biosynthesis; riboflavin biosynthesis; riboflavin from 2-hydroxy-3-oxobutyl phosphate and 5-amino-6-(D-ribitylamino)uracil: step 1/2. Functionally, catalyzes the formation of 6,7-dimethyl-8-ribityllumazine by condensation of 5-amino-6-(D-ribitylamino)uracil with 3,4-dihydroxy-2-butanone 4-phosphate. This is the penultimate step in the biosynthesis of riboflavin. This Lactococcus lactis subsp. lactis (strain IL1403) (Streptococcus lactis) protein is 6,7-dimethyl-8-ribityllumazine synthase.